A 114-amino-acid polypeptide reads, in one-letter code: Ribosome-binding factor A (114 aa).

The protein belongs to the RbfA family. In terms of assembly, monomer. Binds 30S ribosomal subunits, but not 50S ribosomal subunits or 70S ribosomes.

It localises to the cytoplasm. Its function is as follows. One of several proteins that assist in the late maturation steps of the functional core of the 30S ribosomal subunit. Associates with free 30S ribosomal subunits (but not with 30S subunits that are part of 70S ribosomes or polysomes). Required for efficient processing of 16S rRNA. May interact with the 5'-terminal helix region of 16S rRNA. This Macrococcus caseolyticus (strain JCSC5402) (Macrococcoides caseolyticum) protein is Ribosome-binding factor A.